We begin with the raw amino-acid sequence, 309 residues long: Homoserine kinase (309 aa).

91–101 (PIGSGLGSSAC) provides a ligand contact to ATP.

Belongs to the GHMP kinase family. Homoserine kinase subfamily.

Its subcellular location is the cytoplasm. The catalysed reaction is L-homoserine + ATP = O-phospho-L-homoserine + ADP + H(+). It participates in amino-acid biosynthesis; L-threonine biosynthesis; L-threonine from L-aspartate: step 4/5. Catalyzes the ATP-dependent phosphorylation of L-homoserine to L-homoserine phosphate. The protein is Homoserine kinase of Buchnera aphidicola subsp. Acyrthosiphon pisum (strain APS) (Acyrthosiphon pisum symbiotic bacterium).